A 127-amino-acid polypeptide reads, in one-letter code: UPF0166 protein PYRAB06660 (127 aa).

The protein belongs to the UPF0166 family.

This is UPF0166 protein PYRAB06660 from Pyrococcus abyssi (strain GE5 / Orsay).